Consider the following 43-residue polypeptide: Large ribosomal subunit protein uL11 (43 aa).

This sequence belongs to the universal ribosomal protein uL11 family. As to quaternary structure, part of the ribosomal stalk of the 50S ribosomal subunit. Interacts with L10 and the large rRNA to form the base of the stalk. L10 forms an elongated spine to which L12 dimers bind in a sequential fashion forming a multimeric L10(L12)X complex. In terms of processing, one or more lysine residues are methylated.

In terms of biological role, forms part of the ribosomal stalk which helps the ribosome interact with GTP-bound translation factors. In Streptomyces galbus, this protein is Large ribosomal subunit protein uL11 (rplK).